Reading from the N-terminus, the 316-residue chain is Beta-ketoacyl-[acyl-carrier-protein] synthase III 1 (316 aa).

Catalysis depends on residues Cys-112 and His-243. Positions 244-248 are ACP-binding; the sequence is QANYR. Asn-273 is an active-site residue.

It belongs to the thiolase-like superfamily. FabH family. Homodimer.

The protein resides in the cytoplasm. The enzyme catalyses malonyl-[ACP] + acetyl-CoA + H(+) = 3-oxobutanoyl-[ACP] + CO2 + CoA. It functions in the pathway lipid metabolism; fatty acid biosynthesis. Its function is as follows. Catalyzes the condensation reaction of fatty acid synthesis by the addition to an acyl acceptor of two carbons from malonyl-ACP. Catalyzes the first condensation reaction which initiates fatty acid synthesis and may therefore play a role in governing the total rate of fatty acid production. Possesses both acetoacetyl-ACP synthase and acetyl transacylase activities. Its substrate specificity determines the biosynthesis of branched-chain and/or straight-chain of fatty acids. This chain is Beta-ketoacyl-[acyl-carrier-protein] synthase III 1, found in Vibrio cholerae serotype O1 (strain ATCC 39315 / El Tor Inaba N16961).